We begin with the raw amino-acid sequence, 508 residues long: Photosystem II CP47 reaction center protein (508 aa).

6 helical membrane passes run 21-36 (SVHIMHTALVAGWAGS), 101-115 (IVFSGLCFLAAIWHW), 140-156 (GIHLFLSGVACFGFGAF), 203-218 (IAAGTLGILAGLFHLS), 237-252 (VLSSSIAAVFFAAFVV), and 457-472 (SFALLFFFGHIWHGSR).

The protein belongs to the PsbB/PsbC family. PsbB subfamily. As to quaternary structure, PSII is composed of 1 copy each of membrane proteins PsbA, PsbB, PsbC, PsbD, PsbE, PsbF, PsbH, PsbI, PsbJ, PsbK, PsbL, PsbM, PsbT, PsbX, PsbY, PsbZ, Psb30/Ycf12, at least 3 peripheral proteins of the oxygen-evolving complex and a large number of cofactors. It forms dimeric complexes. Requires Binds multiple chlorophylls. PSII binds additional chlorophylls, carotenoids and specific lipids. as cofactor.

It is found in the plastid. The protein resides in the chloroplast thylakoid membrane. One of the components of the core complex of photosystem II (PSII). It binds chlorophyll and helps catalyze the primary light-induced photochemical processes of PSII. PSII is a light-driven water:plastoquinone oxidoreductase, using light energy to abstract electrons from H(2)O, generating O(2) and a proton gradient subsequently used for ATP formation. The polypeptide is Photosystem II CP47 reaction center protein (Capsella bursa-pastoris (Shepherd's purse)).